The following is a 573-amino-acid chain: Poly(ribitol-phosphate) beta-N-acetylglucosaminyltransferase TarS (573 aa).

Residues proline 9, aspartate 41, asparagine 68, arginine 76, 92–94 (DSD), arginine 127, and glutamate 178 contribute to the UDP-N-acetyl-alpha-D-glucosamine site. Aspartate 94 is a binding site for Mn(2+). Aspartate 179 functions as the Proton acceptor in the catalytic mechanism. Residues arginine 207 and 211–213 (HMS) each bind UDP-N-acetyl-alpha-D-glucosamine.

Belongs to the glycosyltransferase 2 family. As to quaternary structure, homotrimer. Mn(2+) is required as a cofactor.

It carries out the reaction 4-O-[(D-ribitylphospho)(n)-di{(2R)-glycerylphospho}]-N-acetyl-beta-D-mannosaminyl-(1-&gt;4)-N-acetyl-alpha-D-glucosaminyl di-trans,octa-cis-undecaprenyl diphosphate + n UDP-N-acetyl-alpha-D-glucosamine = 4-O-([2-N-acetyl-beta-D-glucosaminyl-1-D-ribitylphospho](n)-di{[2R]-1-glycerylphospho})-N-acetyl-beta-D-mannosaminyl-(1-&gt;4)-N-acetyl-alpha-D-glucosaminyl di-trans,octa-cis-undecaprenyl diphosphate + n UDP + n H(+). It participates in cell wall biogenesis; poly(ribitol phosphate) teichoic acid biosynthesis. Functionally, attaches beta-O-GlcNAc (beta-O-N-acetyl-D-glucosamine) residues to the C4 position of poly(RboP)-wall teichoic acids (WTAs). Prefers UDP-GlcNAc as a donor substrate and is specific for poly(ribitol phosphate) WTAs. Can also use UDP-Glc and UDP-GalNAc, but not UDP-galactose or UDP-glucuronic acid. Mediates beta-lactam resistance in methicillin resistant Staphylococcus aureus (MRSA) strains. This chain is Poly(ribitol-phosphate) beta-N-acetylglucosaminyltransferase TarS, found in Staphylococcus aureus (strain MW2).